We begin with the raw amino-acid sequence, 288 residues long: Homoserine kinase (288 aa).

79-89 (PLARGLGSSSS) lines the ATP pocket.

The protein belongs to the GHMP kinase family. Homoserine kinase subfamily.

Its subcellular location is the cytoplasm. It carries out the reaction L-homoserine + ATP = O-phospho-L-homoserine + ADP + H(+). The protein operates within amino-acid biosynthesis; L-threonine biosynthesis; L-threonine from L-aspartate: step 4/5. Catalyzes the ATP-dependent phosphorylation of L-homoserine to L-homoserine phosphate. This is Homoserine kinase from Streptococcus sanguinis (strain SK36).